The primary structure comprises 276 residues: Formamidopyrimidine-DNA glycosylase (276 aa).

Pro-2 (schiff-base intermediate with DNA) is an active-site residue. Glu-3 acts as the Proton donor in catalysis. Lys-59 (proton donor; for beta-elimination activity) is an active-site residue. Residues His-92, Arg-111, and Lys-155 each coordinate DNA. Residues 239-273 (AVYGQTGAPCPRCGTAIEKIKVGGRGTHFCPTCQQ) form an FPG-type zinc finger. The active-site Proton donor; for delta-elimination activity is Arg-263.

It belongs to the FPG family. Monomer. It depends on Zn(2+) as a cofactor.

The enzyme catalyses Hydrolysis of DNA containing ring-opened 7-methylguanine residues, releasing 2,6-diamino-4-hydroxy-5-(N-methyl)formamidopyrimidine.. The catalysed reaction is 2'-deoxyribonucleotide-(2'-deoxyribose 5'-phosphate)-2'-deoxyribonucleotide-DNA = a 3'-end 2'-deoxyribonucleotide-(2,3-dehydro-2,3-deoxyribose 5'-phosphate)-DNA + a 5'-end 5'-phospho-2'-deoxyribonucleoside-DNA + H(+). Functionally, involved in base excision repair of DNA damaged by oxidation or by mutagenic agents. Acts as a DNA glycosylase that recognizes and removes damaged bases. Has a preference for oxidized purines, such as 7,8-dihydro-8-oxoguanine (8-oxoG). Has AP (apurinic/apyrimidinic) lyase activity and introduces nicks in the DNA strand. Cleaves the DNA backbone by beta-delta elimination to generate a single-strand break at the site of the removed base with both 3'- and 5'-phosphates. This chain is Formamidopyrimidine-DNA glycosylase, found in Exiguobacterium sibiricum (strain DSM 17290 / CCUG 55495 / CIP 109462 / JCM 13490 / 255-15).